The primary structure comprises 240 residues: Vesicle-associated membrane protein 727 (240 aa).

At 1-215 the chain is on the cytoplasmic side; it reads MSQKGLIYSF…MWLQSLQMKL (215 aa). Residues 6–133 form the Longin domain; sequence LIYSFVAKGT…NLDREFGPIL (128 aa). Residues 149-209 enclose the v-SNARE coiled-coil homology domain; the sequence is KLSKLKAQIT…RQLRRKMWLQ (61 aa). A helical; Anchor for type IV membrane protein membrane pass occupies residues 216–236; sequence MVAGAVFSFILIVWVVACGGF. Residues 237–240 are Vesicular-facing; the sequence is KCSS.

The protein belongs to the synaptobrevin family. Interacts with subunits of the class C core vacuole/endosome tethering (CORVET) complex including VPS11, VCL1, VPS18, VPS33, VPS3 and VPS8. In terms of tissue distribution, highly expressed in flowers. Detected in leaves, stems and roots.

It is found in the early endosome membrane. Its subcellular location is the endosome membrane. Its function is as follows. Involved in the targeting and/or fusion of transport vesicles to their target membrane. In Arabidopsis thaliana (Mouse-ear cress), this protein is Vesicle-associated membrane protein 727 (VAMP727).